The sequence spans 79 residues: DNA gyrase inhibitor YacG (79 aa).

The Zn(2+) site is built by Cys7, Cys10, Cys26, and Cys30.

This sequence belongs to the DNA gyrase inhibitor YacG family. As to quaternary structure, interacts with GyrB. Zn(2+) is required as a cofactor.

In terms of biological role, inhibits all the catalytic activities of DNA gyrase by preventing its interaction with DNA. Acts by binding directly to the C-terminal domain of GyrB, which probably disrupts DNA binding by the gyrase. In Shewanella pealeana (strain ATCC 700345 / ANG-SQ1), this protein is DNA gyrase inhibitor YacG.